Here is a 403-residue protein sequence, read N- to C-terminus: Na(+)-translocating NADH-quinone reductase subunit B (403 aa).

Transmembrane regions (helical) follow at residues 56–76 (MMIT…WNTG), 121–141 (AYFL…EVLF), 163–183 (ILPP…GVVI), 220–240 (WTAV…AGGI), 258–278 (IHGS…AVLI), 287–307 (IVTG…LIGS), 312–332 (LFGM…GMIF), 348–368 (WVFG…NPAF), and 371–391 (GMML…HFVI). Position 230 is an FMN phosphoryl threonine (Thr230).

It belongs to the NqrB/RnfD family. Composed of six subunits; NqrA, NqrB, NqrC, NqrD, NqrE and NqrF. The cofactor is FMN.

The protein resides in the cell inner membrane. It catalyses the reaction a ubiquinone + n Na(+)(in) + NADH + H(+) = a ubiquinol + n Na(+)(out) + NAD(+). Functionally, NQR complex catalyzes the reduction of ubiquinone-1 to ubiquinol by two successive reactions, coupled with the transport of Na(+) ions from the cytoplasm to the periplasm. NqrA to NqrE are probably involved in the second step, the conversion of ubisemiquinone to ubiquinol. The chain is Na(+)-translocating NADH-quinone reductase subunit B from Stutzerimonas stutzeri (strain A1501) (Pseudomonas stutzeri).